The following is a 68-amino-acid chain: Conotoxin Mr3.4 (68 aa).

A signal peptide spans M1–A19. A propeptide spanning residues V20–R49 is cleaved from the precursor. Disulfide bonds link C53-C67, C54-C63, and C59-C66. P65 carries the post-translational modification 4-hydroxyproline.

This sequence belongs to the conotoxin M superfamily. Expressed by the venom duct.

The protein localises to the secreted. In Conus marmoreus (Marble cone), this protein is Conotoxin Mr3.4.